Reading from the N-terminus, the 404-residue chain is Cysteine desulfurase IscS (404 aa).

Residues 75–76, N155, Q183, and 203–205 contribute to the pyridoxal 5'-phosphate site; these read AT and SAH. Residue K206 is modified to N6-(pyridoxal phosphate)lysine. A pyridoxal 5'-phosphate-binding site is contributed by T243. C328 serves as the catalytic Cysteine persulfide intermediate. C328 serves as a coordination point for [2Fe-2S] cluster.

It belongs to the class-V pyridoxal-phosphate-dependent aminotransferase family. NifS/IscS subfamily. Homodimer. Forms a heterotetramer with IscU, interacts with other sulfur acceptors. Requires pyridoxal 5'-phosphate as cofactor.

It localises to the cytoplasm. It catalyses the reaction (sulfur carrier)-H + L-cysteine = (sulfur carrier)-SH + L-alanine. Its pathway is cofactor biosynthesis; iron-sulfur cluster biosynthesis. Master enzyme that delivers sulfur to a number of partners involved in Fe-S cluster assembly, tRNA modification or cofactor biosynthesis. Catalyzes the removal of elemental sulfur atoms from cysteine to produce alanine. Functions as a sulfur delivery protein for Fe-S cluster synthesis onto IscU, an Fe-S scaffold assembly protein, as well as other S acceptor proteins. This is Cysteine desulfurase IscS from Neisseria gonorrhoeae (strain ATCC 700825 / FA 1090).